The sequence spans 488 residues: Mannosylglycerate hydrolase MGH1 (488 aa).

Residues Y94, W98–D101, Y146, Q167, and G227 contribute to the substrate site. D229 functions as the Proton donor in the catalytic mechanism. Substrate-binding positions include R262 and Y415–W416. The Proton acceptor role is filled by E459.

This sequence belongs to the glycosyl hydrolase 63 family.

It catalyses the reaction (2R)-2-O-(alpha-D-mannosyl)-glycerate + H2O = D-mannose + (R)-glycerate. It carries out the reaction (2R)-2-O-(alpha-D-glucopyranosyl)-glycerate + H2O = (R)-glycerate + D-glucose. With respect to regulation, activity is not dependent on divalent cations, but it is enhanced by Mn(2+). Functionally, catalyzes the hydrolysis of alpha-D-mannosyl-glycerate (MG) to D-glycerate and D-mannose. Can also hydrolyze alpha-D-glucopyranosyl-glycerate (GG)with lower efficiency. The protein is Mannosylglycerate hydrolase MGH1 of Selaginella moellendorffii (Spikemoss).